The primary structure comprises 119 residues: MAKRGGFPGGNMPGNMNNLMKQAQRMQKQMEDKTKEMEEKQWEATAGGGAVTVTVSGKKEVVSVKLSKEVVDPDDIEMLEDLIVAATNEALRKMEEESASAMNSIAGGLGNFGGLGGLF.

The interval 23-45 (AQRMQKQMEDKTKEMEEKQWEAT) is disordered. Basic and acidic residues predominate over residues 28–42 (KQMEDKTKEMEEKQW).

It belongs to the YbaB/EbfC family. As to quaternary structure, homodimer.

It is found in the cytoplasm. Its subcellular location is the nucleoid. In terms of biological role, binds to DNA and alters its conformation. May be involved in regulation of gene expression, nucleoid organization and DNA protection. In Lachnoclostridium phytofermentans (strain ATCC 700394 / DSM 18823 / ISDg) (Clostridium phytofermentans), this protein is Nucleoid-associated protein Cphy_0047.